We begin with the raw amino-acid sequence, 374 residues long: Tuliposide A-converting enzyme b3, amyloplastic (374 aa).

An amyloplast-targeting transit peptide spans 1-68; the sequence is MSAALFCGPP…TNSSLSPSPT (68 aa). The Acyl-ester intermediate role is filled by Ser226. Residues Asp316 and His348 each act as charge relay system in the active site.

Belongs to the AB hydrolase superfamily. Homodimer. Highly expressed in pistil and bulb scales. Lower expression in stem, and barely detected in root, leaf, petal and stamen.

The protein localises to the plastid. It localises to the amyloplast. It carries out the reaction 6-tuliposide A = tulipalin A + D-glucose. In terms of biological role, lactone-forming carboxylesterases, specifically catalyzing intramolecular transesterification, but not hydrolysis. Involved in the biosynthesis of tulipalins, defensive chemicals that show antimicrobial activities against a broad range of strains of bacteria and fungi. Substrates are 6-tuliposide A &gt; 6-tuliposide B. The chain is Tuliposide A-converting enzyme b3, amyloplastic (TCEA-B3) from Tulipa gesneriana (Garden tulip).